Reading from the N-terminus, the 317-residue chain is Tegument protein UL14 homolog (317 aa).

The segment at 166 to 291 is disordered; sequence IAADPHSPRS…QKWLGGIPPL (126 aa). The span at 182 to 195 shows a compositional bias: basic and acidic residues; sequence KAPEDARCGARKPG. Residues 198–211 are compositionally biased toward polar residues; the sequence is NNYTPSAQPRSQET. Composition is skewed to basic and acidic residues over residues 217–236 and 249–265; these read ASPD…EHHS and SERR…KSSE.

It belongs to the alphaherpesvirinae HHV-1 UL14 protein family.

Its subcellular location is the virion tegument. The protein localises to the host cytoplasm. It localises to the host nucleus. Functionally, contributes to the nuclear transport of the viral transcriptional activator VP16 during the early phase of infection. Therefore, participates indirectly in the regulation of the immediate-early gene expression. Additionally, seems to be important for efficient nuclear targeting of capsids. This is Tegument protein UL14 homolog from Equus caballus (Horse).